Here is a 215-residue protein sequence, read N- to C-terminus: MSKVYDWFEERLEIQAIADDITSKYVPPHVNIFYCLGGITLTCFLVQVATGFAMTFYYRPTVTEAFASVQYIMTEANFGWLIRSVHRWSASMMVLMMILHVFRVYLTGGFKKPRELTWVTGVVLAVLTASFGVTGYSLPWDQIGYWAVKIVTGVPDAIPVIGSPLVELLRGSASVGQSTLTRFYSLHTFVLPLLTAVFMLMHFLMIRKQGISGPL.

The helical transmembrane segment at 32–52 (IFYCLGGITLTCFLVQVATGF) threads the bilayer. Cys35 serves as a coordination point for heme c. 2 residues coordinate heme b: His86 and His100. A run of 3 helical transmembrane segments spans residues 90–110 (ASMM…TGGF), 116–136 (LTWV…VTGY), and 186–206 (LHTF…FLMI). Heme b contacts are provided by His187 and His202.

Belongs to the cytochrome b family. PetB subfamily. In terms of assembly, the 4 large subunits of the cytochrome b6-f complex are cytochrome b6, subunit IV (17 kDa polypeptide, PetD), cytochrome f and the Rieske protein, while the 4 small subunits are PetG, PetL, PetM and PetN. The complex functions as a dimer. Heme b serves as cofactor. Heme c is required as a cofactor.

The protein resides in the plastid. It localises to the chloroplast thylakoid membrane. In terms of biological role, component of the cytochrome b6-f complex, which mediates electron transfer between photosystem II (PSII) and photosystem I (PSI), cyclic electron flow around PSI, and state transitions. The chain is Cytochrome b6 from Oenothera elata subsp. hookeri (Hooker's evening primrose).